A 329-amino-acid polypeptide reads, in one-letter code: Delta-aminolevulinic acid dehydratase (329 aa).

The Schiff-base intermediate with substrate role is filled by Lys202. Positions 212 and 223 each coordinate 5-aminolevulinate. Residue Glu239 participates in Mg(2+) binding. Lys254 serves as the catalytic Schiff-base intermediate with substrate. Positions 280 and 319 each coordinate 5-aminolevulinate.

Belongs to the ALAD family. As to quaternary structure, homooctamer.

The catalysed reaction is 2 5-aminolevulinate = porphobilinogen + 2 H2O + H(+). It participates in porphyrin-containing compound metabolism; protoporphyrin-IX biosynthesis; coproporphyrinogen-III from 5-aminolevulinate: step 1/4. Its function is as follows. Catalyzes an early step in the biosynthesis of tetrapyrroles. Binds two molecules of 5-aminolevulinate per subunit, each at a distinct site, and catalyzes their condensation to form porphobilinogen. The polypeptide is Delta-aminolevulinic acid dehydratase (hemB) (Mycobacterium tuberculosis (strain CDC 1551 / Oshkosh)).